The chain runs to 146 residues: Vascular endothelial growth factor isoform GtVF (146 aa).

Positions 1 to 24 are cleaved as a signal peptide; the sequence is MAAYLLAVAILFCIQGWPSGTVQG. Glutamine 25 bears the Pyrrolidone carboxylic acid mark. 3 cysteine pairs are disulfide-bonded: cysteine 38/cysteine 80, cysteine 69/cysteine 115, and cysteine 73/cysteine 117. Residues 116-146 form a disordered region; it reads ECRPRSRSGVDSGKRKRNPEEGEPRAKFPFV. Residues 133–146 are compositionally biased toward basic and acidic residues; the sequence is NPEEGEPRAKFPFV.

This sequence belongs to the PDGF/VEGF growth factor family. Snake venom VEGF subfamily. Homodimer; disulfide-linked. Expressed by the venom gland.

Its subcellular location is the secreted. Functionally, snake venom VEGFs that may contribute to venom dispersion and prey subjugation by inducing vascular permeability and hypotension. This protein induces an increase in capillary permeability after intradermal injection, in a VEGFR-2 (KDR) dependent manner. In addition, it provokes a drastic hypotensive effect after intravenous injection. The hypotension is mediated by nitric oxide (NO), which is produced by VEGF-activated endothelium NO synthase. Also induces angiogenesis in vitro. Unlike other crotalid VEGFs, this protein probably interacts with VEGF receptor-2 (KDR). The chain is Vascular endothelial growth factor isoform GtVF from Gloydius tsushimaensis (Tsushima Island pitviper).